We begin with the raw amino-acid sequence, 29 residues long: Cyclotide psyleio D (29 aa).

The cyclopeptide (Gly-Asp) cross-link spans 1–29 (GLPVCGESCFGGTCNTPGCSCTWPVCTRD). 3 disulfide bridges follow: Cys5/Cys19, Cys9/Cys21, and Cys14/Cys26.

Post-translationally, this is a cyclic peptide.

Probably participates in a plant defense mechanism. The sequence is that of Cyclotide psyleio D from Psychotria brachyceras.